The primary structure comprises 563 residues: Cystathionine gamma-synthase-like protein ankD (563 aa).

The interval 1–37 is disordered; it reads MGELGPASAQHGSDSISFSGSYTQPLGAPQPPNEPHA. The segment covering 10–24 has biased composition (polar residues); the sequence is QHGSDSISFSGSYTQ.

The protein belongs to the trans-sulfuration enzymes family. MET7 subfamily. Pyridoxal 5'-phosphate serves as cofactor.

The catalysed reaction is cyclo(L-arginyl-(Z)-dehydro-3,4-dihydroxytyrosyl) + O-acetyl-L-homoserine = cyclo(L-arginyl-(Z)-dehydro-4-O-homoseryl-tyrosyl) + acetate + H(+). The protein operates within secondary metabolite biosynthesis. Cystathionine gamma-synthase-like protein; part of the ank cluster that mediates the biosynthesis of NK13650 C, a highly modified cyclo-arginine-tyrosine dipeptide. AnkD catalyzes the attachment of L-homoserine moiety using O-acetyl-L-homoserine as co-substrate. Within the pathway, the cyclodipeptide synthase ankA acts as the scaffold-generating enzyme and is responsible for formation of the cyclo-Arg-Tyr diketopiperazine (cRY) from L-Arg and L-Tyr. The ankA product cRY is desaturated by the cytochrome P450 monooxygenase ankB to yield a dehydro-cyclodipeptide intermediate. The FAD-dependent monooxygenase ankC then installs the m-OH, ankD catalyzes the attachment of L-homoserine, and ankE ligates citrate to the ankD product to yield NK13650 B. The O-methyltransferase ankF is responsible for methylation of the C-17 phenol group of NK13650 B to produce NK13650 D. Amidation of NK13650 D with L-Asp by ankG then leads to the production of NK13650 C, whereas amidation of NK13650 B produces NK13650 A. The chain is Cystathionine gamma-synthase-like protein ankD from Aspergillus thermomutatus (Neosartorya pseudofischeri).